The sequence spans 189 residues: UPF0398 protein lp_1753 (189 aa).

Belongs to the UPF0398 family.

This is UPF0398 protein lp_1753 from Lactiplantibacillus plantarum (strain ATCC BAA-793 / NCIMB 8826 / WCFS1) (Lactobacillus plantarum).